The primary structure comprises 88 residues: Small ribosomal subunit protein bS20 (88 aa).

Positions 1–23 are disordered; sequence MANTSSAKKATRKIARRAAINKN.

Belongs to the bacterial ribosomal protein bS20 family.

In terms of biological role, binds directly to 16S ribosomal RNA. The protein is Small ribosomal subunit protein bS20 of Mesorhizobium japonicum (strain LMG 29417 / CECT 9101 / MAFF 303099) (Mesorhizobium loti (strain MAFF 303099)).